Reading from the N-terminus, the 1117-residue chain is MEIKDQGAQMEPLLPTRNDEEAVVDRGGTRSILKTHFEKEDLEGHRTLFIGVHVPLGGRKSHRRHRHRGHKHRKRDRERDSGLEDGGESPSFDTPSQRVQFILGTEDDDEEHIPHDLFTELDEICWREGEDAEWRETARWLKFEEDVEDGGERWSKPYVATLSLHSLFELRSCILNGTVLLDMHANTLEEIADMVLDQQVSSGQLNEDVRHRVHEALMKQHHHQSQKKLTNRIPIVRSFADIGKKQSEPNSMDKNGQVVSPQSAPACAENKNDVSRENSTVDFSKGLGGQQKGHTSPCGMKQRLDKGPPHQQEREVDLHFMKKIPPGAEASNILVGELEFLDRTVVAFVRLSPAVLLQGLAEVPIPSRFLFILLGPLGKGQQYHEIGRSIATLMTDEVFHDVAYKAKDRNDLVSGIDEFLDQVTVLPPGEWDPSIRIEPPKNVPSQEKRKTPSLPNGTAAHGGPEQHGGHSGPELQRTGRIFGGLILDIKRKAPFFWSDFRDAFSLQCLASFLFLYCACMSPVITFGGLLGEATEGRISAIESLFGASMTGIAYSLFGGQPLTILGSTGPVLVFEKILFKFCKEYGLSYLSLRASIGLWTATLCIILVATDASSLVCYITRFTEEAFASLICIIFIYEALEKLFELSESYPINMHNDLELLTQYSCNCMEPHSPSNDTLKEWRESNISASDIIWGNLTVSECRSLHGEYVGRACGHGHPYVPDVLFWSVILFFSTVTMSATLKQFKTSRYFPTKVRSIVSDFAVFLTILCMVLIDYAIGIPSPKLQVPSVFKPTRDDRGWFVTPLGPNPWWTIIAAIIPALLCTILIFMDQQITAVIINRKEHKLKKGCGYHLDLLMVAVMLGVCSIMGLPWFVAATVLSITHVNSLKLESECSAPGEQPKFLGIREQRVTGLMIFILMGSSVFMTSILKFIPMPVLYGVFLYMGASSLKGIQLFDRIKLFWMPAKHQPDFIYLRHVPLRKVHLFTVIQMSCLGLLWIIKVSRAAIVFPMMVLALVFVRKLMDFLFTKRELSWLDDLMPESKKKKLEDAEKEEEQSMLAMEDEGTVQLPLEGHYRDDPSVINISDEMSKTAMWGNLLVTADNSKEKESRFPSKSSPS.

Disordered regions lie at residues 1 to 23 (MEIK…EEAV) and 58 to 97 (GRKS…TPSQ). The Cytoplasmic segment spans residues 1 to 508 (MEIKDQGAQM…DFRDAFSLQC (508 aa)). The segment covering 59 to 76 (RKSHRRHRHRGHKHRKRD) has biased composition (basic residues). Ser89 carries the post-translational modification Phosphoserine. The residue at position 94 (Thr94) is a Phosphothreonine. Ser275 is modified (phosphoserine). 2 disordered regions span residues 282–309 (DFSK…KGPP) and 431–476 (WDPS…PELQ). A helical transmembrane segment spans residues 509-529 (LASFLFLYCACMSPVITFGGL). Topologically, residues 530 to 537 (LGEATEGR) are extracellular. A helical transmembrane segment spans residues 538–558 (ISAIESLFGASMTGIAYSLFG). At 559–561 (GQP) the chain is on the cytoplasmic side. A helical membrane pass occupies residues 562–582 (LTILGSTGPVLVFEKILFKFC). Residues 583–595 (KEYGLSYLSLRAS) are Extracellular-facing. A helical membrane pass occupies residues 596–616 (IGLWTATLCIILVATDASSLV). The Cytoplasmic portion of the chain corresponds to 617-625 (CYITRFTEE). Residues 626-646 (AFASLICIIFIYEALEKLFEL) traverse the membrane as a helical segment. At 647–719 (SESYPINMHN…VGRACGHGHP (73 aa)) the chain is on the extracellular side. N-linked (GlcNAc...) asparagine glycans are attached at residues Asn676, Asn686, and Asn696. The chain crosses the membrane as a helical span at residues 720–740 (YVPDVLFWSVILFFSTVTMSA). Over 741–761 (TLKQFKTSRYFPTKVRSIVSD) the chain is Cytoplasmic. The helical transmembrane segment at 762–782 (FAVFLTILCMVLIDYAIGIPS) threads the bilayer. At 783-808 (PKLQVPSVFKPTRDDRGWFVTPLGPN) the chain is on the extracellular side. The chain crosses the membrane as a helical span at residues 809-829 (PWWTIIAAIIPALLCTILIFM). Residues 830–854 (DQQITAVIINRKEHKLKKGCGYHLD) are Cytoplasmic-facing. Residues 855 to 875 (LLMVAVMLGVCSIMGLPWFVA) traverse the membrane as a helical segment. Residues 876 to 911 (ATVLSITHVNSLKLESECSAPGEQPKFLGIREQRVT) are Extracellular-facing. A helical membrane pass occupies residues 912 to 932 (GLMIFILMGSSVFMTSILKFI). The Cytoplasmic segment spans residues 933-934 (PM). The helical transmembrane segment at 935-955 (PVLYGVFLYMGASSLKGIQLF) threads the bilayer. Over 956–997 (DRIKLFWMPAKHQPDFIYLRHVPLRKVHLFTVIQMSCLGLLW) the chain is Extracellular. Residues 998–1018 (IIKVSRAAIVFPMMVLALVFV) form a helical membrane-spanning segment. At 1019-1117 (RKLMDFLFTK…SRFPSKSSPS (99 aa)) the chain is on the cytoplasmic side. 2 positions are modified to phosphoserine: Ser1056 and Ser1084.

This sequence belongs to the anion exchanger (TC 2.A.31) family. In terms of processing, N-glycosylated. In the brain, detected in cerebral cortex, subcortex, cerebellum, hippocampus and medulla (at protein level). Expressed in neurons but not in astrocytes (at protein level). Isoforms starting with Met-Glu-Ile-Lys are found predominantly in the brain with lower levels in the eye while isoforms starting with Met-Cys-Asp-Leu are most abundant in the kidney with lower levels in the duodenum, jejunum and ileum (at protein level). In the kidney, isoforms starting with Met-Cys-Asp-Leu are primarily expressed in the cortex, the outer stripe of the outer medulla and the inner stripe of the outer medulla (ISOM) but are not detectable in the inner medulla (IM) while isoforms starting with Met-Glu-Ile-Lys are predominantly expressed in the ISOM and IM. Expressed in the brain, in the hippocampus as well as in dentate gyrus, cortical layers, cerebellum, olfactory bulb and in the epithelial cells of the choroid plexus. Detected in pituitary, testis, kidney and ileum. Detected also in spleen and lung. In terms of tissue distribution, mainly expressed in the jejenum (at protein level).

Its subcellular location is the basolateral cell membrane. The protein resides in the apical cell membrane. It localises to the cell projection. It is found in the dendrite. The protein localises to the axon. Its subcellular location is the perikaryon. The protein resides in the presynapse. It localises to the postsynapse. The catalysed reaction is 2 hydrogencarbonate(out) + chloride(in) + Na(+)(out) = 2 hydrogencarbonate(in) + chloride(out) + Na(+)(in). In terms of biological role, sodium/bicarbonate cotransporter which plays an important role in regulating intracellular pH. Has been shown to act as a sodium/bicarbonate cotransporter in exchange for intracellular chloride. Has also been shown to act as a sodium/biocarbonate cotransporter which does not couple net influx of bicarbonate to net efflux of chloride, with the observed chloride efflux being due to chloride self-exchange. Controls neuronal pH and may contribute to the secretion of cerebrospinal fluid. Acting on presynaptic intracellular pH, it promotes GABA release, reduces the excitability of CA1 pyramidal neurons, and modulates short-term synaptic plasticity. Required in retinal cells to maintain normal pH which is necessary for normal vision. In the kidney, likely to mediate bicarbonate reclamation in the apical membrane of the proximal tubules. Sodium/bicarbonate cotransporter which mediates cotransport of sodium and bicarbonate in association with an efflux of intracellular chloride and is involved in NaCl absorption in the small intestine. The polypeptide is Sodium-driven chloride bicarbonate exchanger (Rattus norvegicus (Rat)).